The sequence spans 577 residues: Acyl-coenzyme A synthetase ACSM2B, mitochondrial (577 aa).

The N-terminal 46 residues, 1-46 (MHWLRKVQGLCTLWGTQMSSRTLYINSRQLVSLQWGHQEVPAKFNF), are a transit peptide targeting the mitochondrion. Glutamine 139 serves as a coordination point for CoA. Residues 221–229 (TSGTSGLPK), 359–364 (EFYGQT), aspartate 446, and arginine 461 each bind ATP. Threonine 364 contacts substrate. CoA is bound at residue 469 to 471 (SGY). A substrate-binding site is contributed by arginine 472. Position 501 (arginine 501) interacts with CoA. Serine 513 carries the post-translational modification Phosphoserine. Residues lysine 532 and 540–542 (YPR) contribute to the CoA site. Lysine 557 serves as a coordination point for ATP.

This sequence belongs to the ATP-dependent AMP-binding enzyme family. As to quaternary structure, monomer. Mg(2+) is required as a cofactor. It depends on Mn(2+) as a cofactor. Detected in liver.

The protein resides in the mitochondrion. The enzyme catalyses a medium-chain fatty acid + ATP + CoA = a medium-chain fatty acyl-CoA + AMP + diphosphate. The catalysed reaction is benzoate + ATP + CoA = benzoyl-CoA + AMP + diphosphate. It catalyses the reaction hexanoate + ATP + CoA = hexanoyl-CoA + AMP + diphosphate. It carries out the reaction butanoate + ATP + CoA = butanoyl-CoA + AMP + diphosphate. The enzyme catalyses octanoate + ATP + CoA = octanoyl-CoA + AMP + diphosphate. The catalysed reaction is decanoate + ATP + CoA = decanoyl-CoA + AMP + diphosphate. Activated by monovalent cations, such as potassium, rubidium or ammonium. In terms of biological role, catalyzes the activation of fatty acids by CoA to produce an acyl-CoA, the first step in fatty acid metabolism. Capable of activating medium-chain fatty acids (e.g. butyric (C4) to decanoic (C10) acids), and certain carboxylate-containing xenobiotics, e.g. benzoate. The chain is Acyl-coenzyme A synthetase ACSM2B, mitochondrial (ACSM2B) from Homo sapiens (Human).